Consider the following 212-residue polypeptide: ATP-dependent dethiobiotin synthetase BioD (212 aa).

10–15 (GVGKTF) is a binding site for ATP. T14 is a Mg(2+) binding site. The active site involves K36. Residue S40 coordinates substrate. ATP-binding positions include D45, 106–109 (EGAG), and 167–168 (NC). The Mg(2+) site is built by D45 and E106.

This sequence belongs to the dethiobiotin synthetase family. In terms of assembly, homodimer. It depends on Mg(2+) as a cofactor.

The protein resides in the cytoplasm. It carries out the reaction (7R,8S)-7,8-diammoniononanoate + CO2 + ATP = (4R,5S)-dethiobiotin + ADP + phosphate + 3 H(+). Its pathway is cofactor biosynthesis; biotin biosynthesis; biotin from 7,8-diaminononanoate: step 1/2. Its function is as follows. Catalyzes a mechanistically unusual reaction, the ATP-dependent insertion of CO2 between the N7 and N8 nitrogen atoms of 7,8-diaminopelargonic acid (DAPA, also called 7,8-diammoniononanoate) to form a ureido ring. This is ATP-dependent dethiobiotin synthetase BioD from Methanococcus aeolicus (strain ATCC BAA-1280 / DSM 17508 / OCM 812 / Nankai-3).